Here is a 512-residue protein sequence, read N- to C-terminus: Cytochrome P450 76C1 (512 aa).

Residues 3–23 (IISGQALLLLFCFILSCFLIF) traverse the membrane as a helical segment. Cys-450 is a binding site for heme.

Belongs to the cytochrome P450 family. Heme serves as cofactor.

The protein resides in the membrane. The chain is Cytochrome P450 76C1 (CYP76C1) from Arabidopsis thaliana (Mouse-ear cress).